Here is a 530-residue protein sequence, read N- to C-terminus: Cytochrome P450 monooxygenase aneG (530 aa).

N-linked (GlcNAc...) asparagine glycosylation is present at asparagine 2. A helical transmembrane segment spans residues 43–63; the sequence is WLSILGFTIGCYYVIYTFYAL. A glycan (N-linked (GlcNAc...) asparagine) is linked at asparagine 92. Residue cysteine 474 participates in heme binding.

The protein belongs to the cytochrome P450 family. Requires heme as cofactor.

It localises to the membrane. The enzyme catalyses asperaculane E + reduced [NADPH--hemoprotein reductase] + O2 = asperaculane G + oxidized [NADPH--hemoprotein reductase] + H2O + H(+). It catalyses the reaction asperaculane G + reduced [NADPH--hemoprotein reductase] + O2 = aculene D + oxidized [NADPH--hemoprotein reductase] + CO2 + 2 H2O. It carries out the reaction asperaculane E + 2 reduced [NADPH--hemoprotein reductase] + 2 O2 = aculene D + 2 oxidized [NADPH--hemoprotein reductase] + CO2 + 3 H2O + H(+). The protein operates within secondary metabolite biosynthesis. Its function is as follows. Cytochrome P450 monooxygenase; part of the gene cluster that mediates the biosynthesis of aculenes, a unique type of norsesquiterpenes that contain a nordaucane skeleton linked to an L-proline moiety and are of mixed biosynthetic origin. The pathway begins with the synthesis of dauca-4,7-diene by the terpene cyclase aneC using farnesyl pyrophosphate (FPP) as substrate. The cytochrome P450 monooxygenase aneF then performs the initial oxidation at C-12 of dauca-4,7-diene to yield asperaculane D. Asperaculane D is substrate of the cytochrome P450 monooxygenase aneD for C-10 hydroxylation to yield asperaculane E. The cytochrome P450 monooxygenase aneG then converts asperaculane E into aculene D via C-2 oxidation. The monomodular nonribosomal peptide synthtase aneB adenylates L-proline and the thiohydrolase aneE transfers this activated L-proline derivative to aculenes D and C to produce respectively aculenes B and A. The dioxygenase aneA converts aculene D into aculene C, and aculene B into aculene A by introducing the 5,6-alkene moiety. Asperculanes A, B, C and F, as well as 14-prolyl asperculane C, might be shunt products of the pathway. This chain is Cytochrome P450 monooxygenase aneG, found in Aspergillus aculeatus (strain ATCC 16872 / CBS 172.66 / WB 5094).